A 326-amino-acid chain; its full sequence is ATP synthase subunit gamma, mitochondrial (326 aa).

A mitochondrion-targeting transit peptide spans 1–45 (MAMAALRREGRRLAAAPFTSPTPLNALRSSLVSPSEEIGLSGVRS).

This sequence belongs to the ATPase gamma chain family. As to quaternary structure, F-type ATPases have 2 components, CF(1) - the catalytic core - and CF(0) - the membrane proton channel. CF(1) has five subunits: alpha(3), beta(3), gamma(1), delta(1), epsilon(1). CF(0) has three main subunits: a, b and c.

Its subcellular location is the mitochondrion. It localises to the mitochondrion inner membrane. In terms of biological role, mitochondrial membrane ATP synthase (F(1)F(0) ATP synthase or Complex V) produces ATP from ADP in the presence of a proton gradient across the membrane which is generated by electron transport complexes of the respiratory chain. F-type ATPases consist of two structural domains, F(1) - containing the extramembraneous catalytic core, and F(0) - containing the membrane proton channel, linked together by a central stalk and a peripheral stalk. During catalysis, ATP synthesis in the catalytic domain of F(1) is coupled via a rotary mechanism of the central stalk subunits to proton translocation. Part of the complex F(1) domain and the central stalk which is part of the complex rotary element. The gamma subunit protrudes into the catalytic domain formed of alpha(3)beta(3). Rotation of the central stalk against the surrounding alpha(3)beta(3) subunits leads to hydrolysis of ATP in three separate catalytic sites on the beta subunits. The polypeptide is ATP synthase subunit gamma, mitochondrial (ATPC) (Ipomoea batatas (Sweet potato)).